Here is a 328-residue protein sequence, read N- to C-terminus: PhoH-like protein (328 aa).

135–142 (GPAGTGKT) contacts ATP.

This sequence belongs to the PhoH family.

Its subcellular location is the cytoplasm. This chain is PhoH-like protein, found in Synechocystis sp. (strain ATCC 27184 / PCC 6803 / Kazusa).